A 532-amino-acid chain; its full sequence is CTP synthase (532 aa).

The interval 1-268 (MTTKYIFVTG…DEIVCDHLNL (268 aa)) is amidoligase domain. Ser-14 provides a ligand contact to CTP. Ser-14 provides a ligand contact to UTP. 15 to 20 (SLGKGI) lines the ATP pocket. Residue Tyr-55 participates in L-glutamine binding. An ATP-binding site is contributed by Asp-72. Residues Asp-72 and Glu-142 each contribute to the Mg(2+) site. CTP is bound by residues 149 to 151 (DIE), 189 to 194 (KSKPTQ), and Lys-225. Residues 189-194 (KSKPTQ) and Lys-225 contribute to the UTP site. 241–243 (RDA) is a binding site for ATP. Residues 293–532 (KIALVGKYVA…REFIQASLRK (240 aa)) form the Glutamine amidotransferase type-1 domain. Gly-355 provides a ligand contact to L-glutamine. The active-site Nucleophile; for glutamine hydrolysis is the Cys-382. Residues 383–386 (LGMQ), Glu-406, and Arg-463 contribute to the L-glutamine site. Catalysis depends on residues His-508 and Glu-510.

This sequence belongs to the CTP synthase family. Homotetramer.

The enzyme catalyses UTP + L-glutamine + ATP + H2O = CTP + L-glutamate + ADP + phosphate + 2 H(+). It catalyses the reaction L-glutamine + H2O = L-glutamate + NH4(+). It carries out the reaction UTP + NH4(+) + ATP = CTP + ADP + phosphate + 2 H(+). The protein operates within pyrimidine metabolism; CTP biosynthesis via de novo pathway; CTP from UDP: step 2/2. With respect to regulation, allosterically activated by GTP, when glutamine is the substrate; GTP has no effect on the reaction when ammonia is the substrate. The allosteric effector GTP functions by stabilizing the protein conformation that binds the tetrahedral intermediate(s) formed during glutamine hydrolysis. Inhibited by the product CTP, via allosteric rather than competitive inhibition. Its function is as follows. Catalyzes the ATP-dependent amination of UTP to CTP with either L-glutamine or ammonia as the source of nitrogen. Regulates intracellular CTP levels through interactions with the four ribonucleotide triphosphates. This Halalkalibacterium halodurans (strain ATCC BAA-125 / DSM 18197 / FERM 7344 / JCM 9153 / C-125) (Bacillus halodurans) protein is CTP synthase.